The primary structure comprises 255 residues: Thiazole synthase (255 aa).

The active-site Schiff-base intermediate with DXP is the Lys-95. Residues Gly-156, Ala-182–Gly-183, and Asn-204–Thr-205 contribute to the 1-deoxy-D-xylulose 5-phosphate site.

Belongs to the ThiG family. Homotetramer. Forms heterodimers with either ThiH or ThiS.

Its subcellular location is the cytoplasm. It carries out the reaction [ThiS sulfur-carrier protein]-C-terminal-Gly-aminoethanethioate + 2-iminoacetate + 1-deoxy-D-xylulose 5-phosphate = [ThiS sulfur-carrier protein]-C-terminal Gly-Gly + 2-[(2R,5Z)-2-carboxy-4-methylthiazol-5(2H)-ylidene]ethyl phosphate + 2 H2O + H(+). It functions in the pathway cofactor biosynthesis; thiamine diphosphate biosynthesis. In terms of biological role, catalyzes the rearrangement of 1-deoxy-D-xylulose 5-phosphate (DXP) to produce the thiazole phosphate moiety of thiamine. Sulfur is provided by the thiocarboxylate moiety of the carrier protein ThiS. In vitro, sulfur can be provided by H(2)S. This Aeromonas salmonicida (strain A449) protein is Thiazole synthase.